A 248-amino-acid chain; its full sequence is Allergin-1 (248 aa).

A signal peptide spans 1 to 33 (MGDDDTPVCLSVASCKGVSCWLDKLLLWALTLS). Residues 34–150 (ITLRNTAVDC…DESCSSCLLS (117 aa)) lie on the Extracellular side of the membrane. An Ig-like C2-type domain is found at 54-137 (PNLNSSMSVV…SKYSQNFNFT (84 aa)). The N-linked (GlcNAc...) asparagine glycan is linked to asparagine 68. A disulfide bridge links cysteine 73 with cysteine 120. Asparagine 135 carries an N-linked (GlcNAc...) asparagine glycan. Residues 151–171 (LLLPGVLLGLILPGLAFLIYL) form a helical membrane-spanning segment. The Cytoplasmic portion of the chain corresponds to 172-248 (KYKKGCTGKT…DDYIYSELTY (77 aa)). 2 short sequence motifs (ITIM motif) span residues 216 to 221 (IHYTTP) and 241 to 246 (YIYSEL). Phosphotyrosine is present on residues tyrosine 218 and tyrosine 243.

In terms of assembly, monomer. Interacts (tyrosine-phosphorylated) with PTPN6, PTPN11 and INPP5D. N-glycosylated. In terms of tissue distribution, mast cell-specific. Expressed in primary and transformed mast cells.

It is found in the cell membrane. Immunoglobulin-like receptor which plays an inhibitory role in degranulation of mast cells. Negatively regulates IgE-mediated mast cell activation and suppresses the type I immediate hypersensitivity reaction. The polypeptide is Allergin-1 (Milr1) (Rattus norvegicus (Rat)).